The chain runs to 66 residues: Large ribosomal subunit protein bL35 (66 aa).

Over residues 1 to 44 the composition is skewed to basic residues; that stretch reads MPKLKSHRGAAKRFRKTASGAIKRRGAYRNHILTKKSTKQKRHL. The interval 1 to 48 is disordered; sequence MPKLKSHRGAAKRFRKTASGAIKRRGAYRNHILTKKSTKQKRHLRVEA.

Belongs to the bacterial ribosomal protein bL35 family.

The sequence is that of Large ribosomal subunit protein bL35 from Legionella pneumophila (strain Corby).